The primary structure comprises 392 residues: NADH-quinone oxidoreductase subunit D (392 aa).

The protein belongs to the complex I 49 kDa subunit family. As to quaternary structure, NDH-1 is composed of 14 different subunits. Subunits NuoB, C, D, E, F, and G constitute the peripheral sector of the complex.

The protein localises to the cell inner membrane. The enzyme catalyses a quinone + NADH + 5 H(+)(in) = a quinol + NAD(+) + 4 H(+)(out). In terms of biological role, NDH-1 shuttles electrons from NADH, via FMN and iron-sulfur (Fe-S) centers, to quinones in the respiratory chain. The immediate electron acceptor for the enzyme in this species is believed to be ubiquinone. Couples the redox reaction to proton translocation (for every two electrons transferred, four hydrogen ions are translocated across the cytoplasmic membrane), and thus conserves the redox energy in a proton gradient. The sequence is that of NADH-quinone oxidoreductase subunit D from Parvibaculum lavamentivorans (strain DS-1 / DSM 13023 / NCIMB 13966).